The chain runs to 389 residues: S-adenosylmethionine synthase (389 aa).

Position 18 (His-18) interacts with ATP. Asp-20 serves as a coordination point for Mg(2+). Glu-46 provides a ligand contact to K(+). L-methionine contacts are provided by Glu-59 and Gln-103. Residues 103–113 (QSADIAMGVDS) form a flexible loop region. Residues 168–170 (DSK), Asp-244, 250–251 (RK), Ala-267, and Lys-271 each bind ATP. Asp-244 contributes to the L-methionine binding site. Lys-275 contacts L-methionine.

This sequence belongs to the AdoMet synthase family. In terms of assembly, homotetramer; dimer of dimers. Requires Mg(2+) as cofactor. It depends on K(+) as a cofactor.

The protein localises to the cytoplasm. It carries out the reaction L-methionine + ATP + H2O = S-adenosyl-L-methionine + phosphate + diphosphate. It functions in the pathway amino-acid biosynthesis; S-adenosyl-L-methionine biosynthesis; S-adenosyl-L-methionine from L-methionine: step 1/1. Catalyzes the formation of S-adenosylmethionine (AdoMet) from methionine and ATP. The overall synthetic reaction is composed of two sequential steps, AdoMet formation and the subsequent tripolyphosphate hydrolysis which occurs prior to release of AdoMet from the enzyme. The protein is S-adenosylmethionine synthase of Pelagibacter ubique (strain HTCC1062).